A 264-amino-acid polypeptide reads, in one-letter code: Thymidylate synthase (264 aa).

Arg-21 contacts dUMP. His-51 lines the (6R)-5,10-methylene-5,6,7,8-tetrahydrofolate pocket. 126–127 provides a ligand contact to dUMP; that stretch reads RR. The active-site Nucleophile is the Cys-146. DUMP-binding positions include 166-169, Asn-177, and 207-209; these read RSAD and HIY. A (6R)-5,10-methylene-5,6,7,8-tetrahydrofolate-binding site is contributed by Asp-169. Ser-263 serves as a coordination point for (6R)-5,10-methylene-5,6,7,8-tetrahydrofolate.

The protein belongs to the thymidylate synthase family. Bacterial-type ThyA subfamily. Homodimer.

The protein resides in the cytoplasm. It catalyses the reaction dUMP + (6R)-5,10-methylene-5,6,7,8-tetrahydrofolate = 7,8-dihydrofolate + dTMP. It participates in pyrimidine metabolism; dTTP biosynthesis. In terms of biological role, catalyzes the reductive methylation of 2'-deoxyuridine-5'-monophosphate (dUMP) to 2'-deoxythymidine-5'-monophosphate (dTMP) while utilizing 5,10-methylenetetrahydrofolate (mTHF) as the methyl donor and reductant in the reaction, yielding dihydrofolate (DHF) as a by-product. This enzymatic reaction provides an intracellular de novo source of dTMP, an essential precursor for DNA biosynthesis. This chain is Thymidylate synthase, found in Bacillus pumilus (strain SAFR-032).